Consider the following 90-residue polypeptide: MAFFGKRKEKRKFTQQNPLFKRRKFCRFTAAGVEEIDYKDLDTLRDFVQENGKIIPARLTGTRAIYQRQLDSAIKRARFLALLPYTDNHN.

It belongs to the bacterial ribosomal protein bS18 family. Part of the 30S ribosomal subunit. Forms a tight heterodimer with protein bS6.

Its function is as follows. Binds as a heterodimer with protein bS6 to the central domain of the 16S rRNA, where it helps stabilize the platform of the 30S subunit. The polypeptide is Small ribosomal subunit protein bS18 (Bordetella avium (strain 197N)).